The sequence spans 206 residues: RNA pyrophosphohydrolase (206 aa).

The 144-residue stretch at 6-149 (GYRPNVGIVL…KRGVYARALR (144 aa)) folds into the Nudix hydrolase domain. The Nudix box signature appears at 38-59 (GGMNTDETPVEAMYRELQEETG). Residues 175 to 206 (MPGHTAGHDRPRKRPRTRGYWPKKATGDGPAS) are disordered.

It belongs to the Nudix hydrolase family. RppH subfamily. A divalent metal cation is required as a cofactor.

Its function is as follows. Accelerates the degradation of transcripts by removing pyrophosphate from the 5'-end of triphosphorylated RNA, leading to a more labile monophosphorylated state that can stimulate subsequent ribonuclease cleavage. This Stenotrophomonas maltophilia (strain K279a) protein is RNA pyrophosphohydrolase.